The chain runs to 301 residues: ATP synthase F(0) complex subunit B1, mitochondrial (301 aa).

The N-terminal 21 residues, 1–21, are a transit peptide targeting the mitochondrion; sequence MSLSRLSSPQTFSRVFIVARG.

The protein belongs to the eukaryotic ATPase B chain family. Subunit of the F-type ATPase which has 2 components, CF(1) - the catalytic core - and CF(0) - the membrane proton channel.

Its subcellular location is the mitochondrion. The protein localises to the mitochondrion inner membrane. Functionally, mitochondrial membrane ATP synthase (F(1)F(0) ATP synthase or Complex V) produces ATP from ADP in the presence of a proton gradient across the membrane which is generated by electron transport complexes of the respiratory chain. F-type ATPases consist of two structural domains, F(1) - containing the extramembraneous catalytic core, and F(0) - containing the membrane proton channel, linked together by a central stalk and a peripheral stalk. During catalysis, ATP synthesis in the catalytic domain of F(1) is coupled via a rotary mechanism of the central stalk subunits to proton translocation. Part of the complex F(0) domain and the peripheric stalk, which acts as a stator to hold the subunits of the catalytic subcomplexes relative to the rotary elements. Plays a role in germline development. The protein is ATP synthase F(0) complex subunit B1, mitochondrial of Caenorhabditis elegans.